Consider the following 414-residue polypeptide: Ankyrin repeat domain-containing protein 10 (414 aa).

ANK repeat units lie at residues 18–47 (TLRF…RSDL), 54–83 (YGWT…SVNA), 88–117 (FAQT…NINK), 121–150 (VGET…QIDL), and 154–187 (SGLT…RYYS). The segment at 310–332 (GVTSPSRHRIHTSNGTEEPEKAM) is disordered.

This is Ankyrin repeat domain-containing protein 10 (ANKRD10) from Gallus gallus (Chicken).